Here is a 303-residue protein sequence, read N- to C-terminus: Acetaldehyde dehydrogenase (303 aa).

C131 serves as the catalytic Acyl-thioester intermediate. Residues 162-170 and N273 contribute to the NAD(+) site; that span reads SVGPGTRAN.

This sequence belongs to the acetaldehyde dehydrogenase family.

It carries out the reaction acetaldehyde + NAD(+) + CoA = acetyl-CoA + NADH + H(+). The protein is Acetaldehyde dehydrogenase of Marinomonas sp. (strain MWYL1).